The following is a 33-amino-acid chain: MNLEVIAQLIALALIVGSGPLVIALLAARKGNL.

Residues 5 to 25 (VIAQLIALALIVGSGPLVIAL) traverse the membrane as a helical segment.

This sequence belongs to the Psb30/Ycf12 family. As to quaternary structure, PSII is composed of 1 copy each of membrane proteins PsbA, PsbB, PsbC, PsbD, PsbE, PsbF, PsbH, PsbI, PsbJ, PsbK, PsbL, PsbM, PsbT, PsbX, PsbY, PsbZ, Psb30/Ycf12, peripheral proteins of the oxygen-evolving complex and a large number of cofactors. It forms dimeric complexes.

The protein resides in the plastid. Its subcellular location is the chloroplast thylakoid membrane. In terms of biological role, a core subunit of photosystem II (PSII), probably helps stabilize the reaction center. The polypeptide is Photosystem II reaction center protein Psb30 (Physcomitrium patens (Spreading-leaved earth moss)).